The chain runs to 133 residues: Ribosome-binding factor A (133 aa).

The protein belongs to the RbfA family. Monomer. Binds 30S ribosomal subunits, but not 50S ribosomal subunits or 70S ribosomes.

Its subcellular location is the cytoplasm. Its function is as follows. One of several proteins that assist in the late maturation steps of the functional core of the 30S ribosomal subunit. Associates with free 30S ribosomal subunits (but not with 30S subunits that are part of 70S ribosomes or polysomes). Required for efficient processing of 16S rRNA. May interact with the 5'-terminal helix region of 16S rRNA. The protein is Ribosome-binding factor A of Synechocystis sp. (strain ATCC 27184 / PCC 6803 / Kazusa).